Consider the following 85-residue polypeptide: Small ribosomal subunit protein bS16 (85 aa).

This sequence belongs to the bacterial ribosomal protein bS16 family.

This chain is Small ribosomal subunit protein bS16, found in Neorickettsia sennetsu (strain ATCC VR-367 / Miyayama) (Ehrlichia sennetsu).